Reading from the N-terminus, the 108-residue chain is UPF0235 protein Rpal_0418 (108 aa).

This sequence belongs to the UPF0235 family.

The polypeptide is UPF0235 protein Rpal_0418 (Rhodopseudomonas palustris (strain TIE-1)).